The primary structure comprises 239 residues: Orotidine 5'-phosphate decarboxylase (239 aa).

Substrate contacts are provided by residues aspartate 12, lysine 34, 61–70 (DLKFHDIPNT), threonine 125, arginine 188, glutamine 197, glycine 217, and arginine 218. Lysine 63 acts as the Proton donor in catalysis.

This sequence belongs to the OMP decarboxylase family. Type 1 subfamily. Homodimer.

The enzyme catalyses orotidine 5'-phosphate + H(+) = UMP + CO2. Its pathway is pyrimidine metabolism; UMP biosynthesis via de novo pathway; UMP from orotate: step 2/2. In terms of biological role, catalyzes the decarboxylation of orotidine 5'-monophosphate (OMP) to uridine 5'-monophosphate (UMP). In Syntrophomonas wolfei subsp. wolfei (strain DSM 2245B / Goettingen), this protein is Orotidine 5'-phosphate decarboxylase.